The sequence spans 271 residues: 3-methyl-2-oxobutanoate hydroxymethyltransferase 1 (271 aa).

Positions 53 and 92 each coordinate Mg(2+). Residues 53 to 54 (DS), aspartate 92, and lysine 120 contribute to the 3-methyl-2-oxobutanoate site. Glutamate 122 is a Mg(2+) binding site. Glutamate 189 (proton acceptor) is an active-site residue.

Belongs to the PanB family. Homodecamer; pentamer of dimers. The cofactor is Mg(2+).

It is found in the cytoplasm. It catalyses the reaction 3-methyl-2-oxobutanoate + (6R)-5,10-methylene-5,6,7,8-tetrahydrofolate + H2O = 2-dehydropantoate + (6S)-5,6,7,8-tetrahydrofolate. The protein operates within cofactor biosynthesis; (R)-pantothenate biosynthesis; (R)-pantoate from 3-methyl-2-oxobutanoate: step 1/2. Its function is as follows. Catalyzes the reversible reaction in which hydroxymethyl group from 5,10-methylenetetrahydrofolate is transferred onto alpha-ketoisovalerate to form ketopantoate. This Burkholderia ambifaria (strain ATCC BAA-244 / DSM 16087 / CCUG 44356 / LMG 19182 / AMMD) (Burkholderia cepacia (strain AMMD)) protein is 3-methyl-2-oxobutanoate hydroxymethyltransferase 1.